Reading from the N-terminus, the 303-residue chain is tRNA dimethylallyltransferase (303 aa).

Position 9-16 (9-16 (GPTASGKS)) interacts with ATP. 11 to 16 (TASGKS) provides a ligand contact to substrate. The interval 34 to 37 (DSKQ) is interaction with substrate tRNA.

The protein belongs to the IPP transferase family. As to quaternary structure, monomer. Mg(2+) is required as a cofactor.

The catalysed reaction is adenosine(37) in tRNA + dimethylallyl diphosphate = N(6)-dimethylallyladenosine(37) in tRNA + diphosphate. Functionally, catalyzes the transfer of a dimethylallyl group onto the adenine at position 37 in tRNAs that read codons beginning with uridine, leading to the formation of N6-(dimethylallyl)adenosine (i(6)A). The polypeptide is tRNA dimethylallyltransferase (Ehrlichia chaffeensis (strain ATCC CRL-10679 / Arkansas)).